We begin with the raw amino-acid sequence, 191 residues long: NADH-quinone oxidoreductase subunit B (191 aa).

4 residues coordinate [4Fe-4S] cluster: Cys52, Cys53, Cys118, and Cys148.

The protein belongs to the complex I 20 kDa subunit family. As to quaternary structure, NDH-1 is composed of 14 different subunits. Subunits NuoB, C, D, E, F, and G constitute the peripheral sector of the complex. [4Fe-4S] cluster serves as cofactor.

It is found in the cell inner membrane. The catalysed reaction is a quinone + NADH + 5 H(+)(in) = a quinol + NAD(+) + 4 H(+)(out). NDH-1 shuttles electrons from NADH, via FMN and iron-sulfur (Fe-S) centers, to quinones in the respiratory chain. The immediate electron acceptor for the enzyme in this species is believed to be a menaquinone. Couples the redox reaction to proton translocation (for every two electrons transferred, four hydrogen ions are translocated across the cytoplasmic membrane), and thus conserves the redox energy in a proton gradient. This chain is NADH-quinone oxidoreductase subunit B, found in Azobacteroides pseudotrichonymphae genomovar. CFP2.